We begin with the raw amino-acid sequence, 282 residues long: Elongation factor Ts (282 aa).

Residues 80-83 (TDFV) form an involved in Mg(2+) ion dislocation from EF-Tu region.

Belongs to the EF-Ts family.

The protein resides in the cytoplasm. Functionally, associates with the EF-Tu.GDP complex and induces the exchange of GDP to GTP. It remains bound to the aminoacyl-tRNA.EF-Tu.GTP complex up to the GTP hydrolysis stage on the ribosome. The sequence is that of Elongation factor Ts from Protochlamydia amoebophila (strain UWE25).